Here is a 616-residue protein sequence, read N- to C-terminus: Dihydroxy-acid dehydratase (616 aa).

A Mg(2+)-binding site is contributed by aspartate 81. Position 122 (cysteine 122) interacts with [2Fe-2S] cluster. Residues aspartate 123 and lysine 124 each coordinate Mg(2+). Lysine 124 is subject to N6-carboxylysine. [2Fe-2S] cluster is bound at residue cysteine 195. Glutamate 491 lines the Mg(2+) pocket. The active-site Proton acceptor is serine 517.

This sequence belongs to the IlvD/Edd family. Homodimer. Requires [2Fe-2S] cluster as cofactor. The cofactor is Mg(2+).

It catalyses the reaction (2R)-2,3-dihydroxy-3-methylbutanoate = 3-methyl-2-oxobutanoate + H2O. The enzyme catalyses (2R,3R)-2,3-dihydroxy-3-methylpentanoate = (S)-3-methyl-2-oxopentanoate + H2O. It functions in the pathway amino-acid biosynthesis; L-isoleucine biosynthesis; L-isoleucine from 2-oxobutanoate: step 3/4. Its pathway is amino-acid biosynthesis; L-valine biosynthesis; L-valine from pyruvate: step 3/4. Its function is as follows. Functions in the biosynthesis of branched-chain amino acids. Catalyzes the dehydration of (2R,3R)-2,3-dihydroxy-3-methylpentanoate (2,3-dihydroxy-3-methylvalerate) into 2-oxo-3-methylpentanoate (2-oxo-3-methylvalerate) and of (2R)-2,3-dihydroxy-3-methylbutanoate (2,3-dihydroxyisovalerate) into 2-oxo-3-methylbutanoate (2-oxoisovalerate), the penultimate precursor to L-isoleucine and L-valine, respectively. The polypeptide is Dihydroxy-acid dehydratase (Escherichia coli (strain 55989 / EAEC)).